Consider the following 259-residue polypeptide: 4-hydroxy-tetrahydrodipicolinate reductase (259 aa).

NAD(+) is bound by residues 9-14 (GAGGRM) and Glu35. Arg36 contributes to the NADP(+) binding site. NAD(+) contacts are provided by residues 92 to 94 (GTT) and 116 to 119 (APNM). His149 acts as the Proton donor/acceptor in catalysis. Position 150 (His150) interacts with (S)-2,3,4,5-tetrahydrodipicolinate. Lys153 functions as the Proton donor in the catalytic mechanism. 159 to 160 (GT) contacts (S)-2,3,4,5-tetrahydrodipicolinate.

Belongs to the DapB family.

It is found in the cytoplasm. It carries out the reaction (S)-2,3,4,5-tetrahydrodipicolinate + NAD(+) + H2O = (2S,4S)-4-hydroxy-2,3,4,5-tetrahydrodipicolinate + NADH + H(+). The catalysed reaction is (S)-2,3,4,5-tetrahydrodipicolinate + NADP(+) + H2O = (2S,4S)-4-hydroxy-2,3,4,5-tetrahydrodipicolinate + NADPH + H(+). It participates in amino-acid biosynthesis; L-lysine biosynthesis via DAP pathway; (S)-tetrahydrodipicolinate from L-aspartate: step 4/4. Functionally, catalyzes the conversion of 4-hydroxy-tetrahydrodipicolinate (HTPA) to tetrahydrodipicolinate. The polypeptide is 4-hydroxy-tetrahydrodipicolinate reductase (Nitratidesulfovibrio vulgaris (strain DSM 19637 / Miyazaki F) (Desulfovibrio vulgaris)).